Consider the following 227-residue polypeptide: Zinc finger protein 511 (227 aa).

C2H2-type zinc fingers lie at residues Phe80–His105, Asn107–His130, and Tyr144–His169. The disordered stretch occupies residues Pro180–Asp204. Residues Pro186 to Ala198 show a composition bias toward low complexity.

The protein belongs to the krueppel C2H2-type zinc-finger protein family.

The protein resides in the nucleus. In terms of biological role, may be involved in transcriptional regulation. This Mus musculus (Mouse) protein is Zinc finger protein 511 (Znf511).